Reading from the N-terminus, the 598-residue chain is uncharacterized protein (598 aa).

Mn(2+) is bound by residues Asp397, Asp408, Glu506, and Glu520.

The protein belongs to the peptidase M24B family. Mn(2+) is required as a cofactor.

This is an uncharacterized protein from Schizosaccharomyces pombe (strain 972 / ATCC 24843) (Fission yeast).